Consider the following 369-residue polypeptide: Cytokine receptor common subunit gamma (369 aa).

A signal peptide spans 1-22 (MLKPSLPFTSLLFLQLPLLGVG). At 23-262 (LNTTILTPNG…ENPFLFALEA (240 aa)) the chain is on the extracellular side. 4 N-linked (GlcNAc...) asparagine glycosylation sites follow: Asn24, Asn71, Asn75, and Asn84. Cys62 and Cys72 are oxidised to a cystine. A disulfide bond links Cys102 and Cys115. One can recognise a Fibronectin type-III domain in the interval 156–253 (APENLTLHKL…IHWGSNTSKE (98 aa)). N-linked (GlcNAc...) asparagine glycosylation occurs at Asn159. Cys182 and Cys231 are joined by a disulfide. Residues 237-241 (WSEWS) carry the WSXWS motif motif. N-linked (GlcNAc...) asparagine glycosylation occurs at Asn249. The chain crosses the membrane as a helical span at residues 263–283 (VVISVGSMGLIISLLCVYFWL). At 284–369 (ERTMPRIPTL…PPCYTLKPET (86 aa)) the chain is on the cytoplasmic side. Positions 286–294 (TMPRIPTLK) match the Box 1 motif motif. Thr292 bears the Phosphothreonine mark.

The protein belongs to the type I cytokine receptor family. Type 5 subfamily. In terms of assembly, the gamma subunit is common to the IL2, IL4, IL7, IL15, IL21 and probably also the IL13 receptors. Interacts with SHB upon interleukin stimulation. Interacts with IL9. (Microbial infection) Interacts with HTLV-1 accessory protein p12I.

The protein resides in the cell membrane. It localises to the cell surface. Common subunit for the receptors for a variety of interleukins. Probably in association with IL15RA, involved in the stimulation of neutrophil phagocytosis by IL15. This Homo sapiens (Human) protein is Cytokine receptor common subunit gamma (IL2RG).